We begin with the raw amino-acid sequence, 604 residues long: Sulfite reductase [NADPH] flavoprotein alpha-component (604 aa).

Residues 66-204 (VTVLSASQTG…AADGWTDNIA (139 aa)) form the Flavodoxin-like domain. FMN is bound by residues 72–77 (SQTGNA), 119–122 (STQG), and 155–164 (LGDSSYPNFC). Positions 239 to 453 (ADPFPAALLA…VERNDGFRLP (215 aa)) constitute an FAD-binding FR-type domain. Residues Thr327, Gln361, 391–394 (RLYS), 409–411 (TVG), and 424–427 (GGAS) contribute to the FAD site. NADP(+) is bound by residues 524 to 525 (SR), 530 to 534 (KIYVQ), and Asp566. Tyr604 provides a ligand contact to FAD.

Belongs to the NADPH-dependent sulphite reductase flavoprotein subunit CysJ family. This sequence in the N-terminal section; belongs to the flavodoxin family. It in the C-terminal section; belongs to the flavoprotein pyridine nucleotide cytochrome reductase family. As to quaternary structure, alpha(8)-beta(8). The alpha component is a flavoprotein, the beta component is a hemoprotein. It depends on FAD as a cofactor. FMN is required as a cofactor.

The catalysed reaction is hydrogen sulfide + 3 NADP(+) + 3 H2O = sulfite + 3 NADPH + 4 H(+). The protein operates within sulfur metabolism; hydrogen sulfide biosynthesis; hydrogen sulfide from sulfite (NADPH route): step 1/1. In terms of biological role, component of the sulfite reductase complex that catalyzes the 6-electron reduction of sulfite to sulfide. This is one of several activities required for the biosynthesis of L-cysteine from sulfate. The flavoprotein component catalyzes the electron flow from NADPH -&gt; FAD -&gt; FMN to the hemoprotein component. The chain is Sulfite reductase [NADPH] flavoprotein alpha-component from Neisseria meningitidis serogroup A / serotype 4A (strain DSM 15465 / Z2491).